A 252-amino-acid chain; its full sequence is Ubiquinone biosynthesis protein COQ4 homolog 2, mitochondrial (252 aa).

Zn(2+)-binding residues include His-130, Asp-131, His-134, and Glu-146.

It belongs to the COQ4 family. As to quaternary structure, component of a multi-subunit COQ enzyme complex. The cofactor is Zn(2+).

It is found in the mitochondrion inner membrane. The enzyme catalyses a 4-hydroxy-3-methoxy-5-(all-trans-polyprenyl)benzoate + H(+) = a 2-methoxy-6-(all-trans-polyprenyl)phenol + CO2. It functions in the pathway cofactor biosynthesis; ubiquinone biosynthesis. Lyase that catalyzes the C1-decarboxylation of 4-hydroxy-3-methoxy-5-(all-trans-polyprenyl)benzoic acid into 2-methoxy-6-(all-trans-polyprenyl)phenol during ubiquinone biosynthesis. This chain is Ubiquinone biosynthesis protein COQ4 homolog 2, mitochondrial, found in Trypanosoma cruzi (strain CL Brener).